The chain runs to 255 residues: Flagellar brake protein YcgR (255 aa).

In terms of domain architecture, PilZ spans 122–240; the sequence is QRRTYFRINT…ERDLQQVIFE (119 aa).

The protein belongs to the YcgR family. As to quaternary structure, monomer. Interacts with the flagellar basal bodies.

The protein localises to the bacterial flagellum basal body. Its function is as follows. Acts as a flagellar brake, regulating swimming and swarming in a bis-(3'-5') cyclic diguanylic acid (c-di-GMP)-dependent manner. Binds 1 c-di-GMP dimer per subunit. Increasing levels of c-di-GMP lead to decreased motility. In Pectobacterium carotovorum subsp. carotovorum (strain PC1), this protein is Flagellar brake protein YcgR.